Consider the following 1049-residue polypeptide: Desmoglein-1 (1049 aa).

The signal sequence occupies residues 1–23 (MDWSFFRVVAMLFIFLVVVEVNS). Residues 24–49 (EFRIQVRDYNTKNGTIKWHSIRRQKR) constitute a propeptide that is removed on maturation. N36, N110, and N180 each carry an N-linked (GlcNAc...) asparagine glycan. Cadherin domains are found at residues 50 to 158 (EWIK…PVFS), 159 to 270 (MATF…PYME), 271 to 385 (QSSY…GPVF), and 386 to 497 (RPGS…TEPN). The Extracellular portion of the chain corresponds to 50–548 (EWIKFAAACR…LLSDNVHFGP (499 aa)). Residues 485–534 (SFGNDDRTNTEPNTKITTNTGRQESTSSTNYDTSTTSTDSSQVYSSEPGN) are disordered. Over residues 494–508 (TEPNTKITTNTGRQE) the composition is skewed to polar residues. The segment covering 509 to 530 (STSSTNYDTSTTSTDSSQVYSS) has biased composition (low complexity). A helical membrane pass occupies residues 549–569 (AGIGLLIMGFLVLGLVPFLMI). Residues 570–1049 (CCDCGGAPRS…TKYSTVQYSK (480 aa)) are Cytoplasmic-facing. S579 is subject to Phosphoserine. Desmoglein repeat repeat units follow at residues 813-839 (TYPSGPGVLHPKPILDPLGYGNVTVTE), 840-869 (SYTTSDTLKPSVHVHDNRPASNVVVTERVV), 870-899 (GPISGADLHGMLEMPDLRDGSNVIVTERVI), 900-927 (APSSSLPTSLTIHHPRESSNVVVTERVI), and 928-956 (QPTSGMIGSLSMHPELANAHNVIVTERVV). Positions 1014–1035 (HMRSSSDHHFNQTIGSASPSTA) are disordered. Positions 1024 to 1035 (NQTIGSASPSTA) are enriched in polar residues.

As to quaternary structure, binds to JUP/plakoglobin. Interacts with PKP2. Interacts with DSC3; there is evidence to suggest that the interaction promotes cell-cell adhesion of keratinocytes. (Microbial infection) Interacts with Staphylococcus aureus protein SdrD; this interaction increases S.aureus adherence to keratinocytes. As to expression, expressed in all suprabasal layers of the epidermis, with the highest expression seen in the granular layer (at protein level).

It localises to the cell membrane. It is found in the cell junction. The protein localises to the desmosome. Its subcellular location is the cytoplasm. The protein resides in the nucleus. Component of intercellular desmosome junctions. Involved in the interaction of plaque proteins and intermediate filaments mediating cell-cell adhesion. The protein is Desmoglein-1 (DSG1) of Homo sapiens (Human).